A 190-amino-acid polypeptide reads, in one-letter code: CASP-like protein 1E1 (190 aa).

The tract at residues 1–21 is disordered; that stretch reads MEHESKTKMDGIEMEKGKKEN. The Cytoplasmic portion of the chain corresponds to 1 to 28; the sequence is MEHESKTKMDGIEMEKGKKENGSRKGVE. Residues 29 to 49 form a helical membrane-spanning segment; the sequence is ITMRVLALVLTMVAATVLGVA. The Extracellular portion of the chain corresponds to 50–83; it reads KQTEVVPIKLIPTLPPLNVATTAKASYLSAFVYN. Residues 84 to 104 traverse the membrane as a helical segment; sequence ICANAIACGYTAISIMIVIIS. The Cytoplasmic segment spans residues 105-111; that stretch reads KGRRSKC. A helical membrane pass occupies residues 112 to 132; that stretch reads LLMAVLIGDLMMVALLCSSTG. The Extracellular portion of the chain corresponds to 133 to 163; sequence AAGAIGLMGRHGNKHVMWKKVCGVFGKFCNQ. A helical membrane pass occupies residues 164–184; sequence AAVSVAITLIASVVFMLLVVL. Topologically, residues 185-190 are cytoplasmic; the sequence is DALKLP.

Belongs to the Casparian strip membrane proteins (CASP) family. In terms of assembly, homodimer and heterodimers.

Its subcellular location is the cell membrane. This is CASP-like protein 1E1 from Arabidopsis lyrata subsp. lyrata (Lyre-leaved rock-cress).